A 168-amino-acid chain; its full sequence is MNISNKIGIYPGTFDPITFGHLDIIKRACKLVDKLIIGVAENVNKHTNFDIRLRTSMAKNEVKGAGIDADIISFNGLLVKFAKEQNASVIIRGLRAVSDFDYEFQMSWVNYKLFPEIETIFLPASEDTQFISSSFVKEIARLGGDVSNFVSKSVQSELINLNRVENGE.

Thr13 contributes to the substrate binding site. ATP contacts are provided by residues 13 to 14 (TF) and His21. Lys45, Leu78, and Arg92 together coordinate substrate. Residues 93–95 (GLR), Glu103, and 128–134 (TQFISSS) each bind ATP.

Belongs to the bacterial CoaD family. As to quaternary structure, homohexamer. Mg(2+) serves as cofactor.

The protein localises to the cytoplasm. The catalysed reaction is (R)-4'-phosphopantetheine + ATP + H(+) = 3'-dephospho-CoA + diphosphate. It functions in the pathway cofactor biosynthesis; coenzyme A biosynthesis; CoA from (R)-pantothenate: step 4/5. Its function is as follows. Reversibly transfers an adenylyl group from ATP to 4'-phosphopantetheine, yielding dephospho-CoA (dPCoA) and pyrophosphate. The sequence is that of Phosphopantetheine adenylyltransferase from Wolbachia pipientis subsp. Culex pipiens (strain wPip).